The sequence spans 143 residues: Anti-sigma F factor (143 aa).

The protein belongs to the anti-sigma-factor family.

The catalysed reaction is L-seryl-[protein] + ATP = O-phospho-L-seryl-[protein] + ADP + H(+). It carries out the reaction L-threonyl-[protein] + ATP = O-phospho-L-threonyl-[protein] + ADP + H(+). Binds to sigma F and blocks its ability to form an RNA polymerase holoenzyme (E-sigma F). Phosphorylates SpoIIAA on a serine residue. This phosphorylation may enable SpoIIAA to act as an anti-anti-sigma factor that counteracts SpoIIAB and thus releases sigma F from inhibition. The chain is Anti-sigma F factor from Clostridium beijerinckii (strain ATCC 51743 / NCIMB 8052) (Clostridium acetobutylicum).